The sequence spans 101 residues: A-type ATP synthase subunit F (101 aa).

This sequence belongs to the V-ATPase F subunit family. As to quaternary structure, has multiple subunits with at least A(3), B(3), C, D, E, F, H, I and proteolipid K(x).

Its subcellular location is the cell membrane. Functionally, component of the A-type ATP synthase that produces ATP from ADP in the presence of a proton gradient across the membrane. The sequence is that of A-type ATP synthase subunit F from Archaeoglobus fulgidus (strain ATCC 49558 / DSM 4304 / JCM 9628 / NBRC 100126 / VC-16).